The chain runs to 555 residues: Potassium-transporting ATPase potassium-binding subunit (555 aa).

A run of 10 helical transmembrane segments spans residues 2–22 (IWVAVVITMLLFILVAKPTGI), 60–80 (QYALSLVLLNGFMIVVVYFVF), 130–150 (IGITFLMFAAPATTLALVMAF), 173–193 (VFLPIAFMAALVFVALGVPQT), 246–266 (MSNILQMMLMMLLPTALPFTY), 278–298 (ILFVSLFMVFLLGFITITTSE), 374–394 (AGFVNIIMYAIIAVFISGLMV), 412–432 (LIAVTILFHPLLILGFSALAL), 483–503 (LVMFLGRYFSLITMLAVAASL), and 525–545 (GIFIGTIVIVGALTFFPMLVL).

Belongs to the KdpA family. In terms of assembly, the system is composed of three essential subunits: KdpA, KdpB and KdpC.

It is found in the cell membrane. Its function is as follows. Part of the high-affinity ATP-driven potassium transport (or Kdp) system, which catalyzes the hydrolysis of ATP coupled with the electrogenic transport of potassium into the cytoplasm. This subunit binds the extracellular potassium ions and delivers the ions to the membrane domain of KdpB through an intramembrane tunnel. In Bacillus cereus (strain ATCC 10987 / NRS 248), this protein is Potassium-transporting ATPase potassium-binding subunit.